A 236-amino-acid polypeptide reads, in one-letter code: Glyoxalase 3 (236 aa).

Catalysis depends on residues cysteine 136, histidine 137, and glutamate 168. Position 136 is a cysteine sulfinic acid (-SO2H) (cysteine 136).

It belongs to the peptidase C56 family. HSP31-like subfamily. In terms of assembly, monomer.

It carries out the reaction methylglyoxal + H2O = (R)-lactate + H(+). Its function is as follows. Catalyzes the conversion of methylglyoxal (MG) to D-lactate in a single glutathione (GSH)-independent step. Selective for MG, does not use glyoxal as substrate. Plays a role in detoxifying endogenously produced MG, particularly when glycerol is the principal carbon source. Important for viability in stationary phase. The polypeptide is Glyoxalase 3 (Candida albicans (strain SC5314 / ATCC MYA-2876) (Yeast)).